A 180-amino-acid polypeptide reads, in one-letter code: Signaling threshold-regulating transmembrane adapter 1 (180 aa).

Over 1–24 the chain is Extracellular; it reads MSRDYNCTTDDQLAWGIPSISHAW. N-linked (GlcNAc...) asparagine glycosylation occurs at Asn6. The chain crosses the membrane as a helical; Signal-anchor for type III membrane protein span at residues 25–45; that stretch reads GLWALLGVVTVLLLISLAALL. The Cytoplasmic portion of the chain corresponds to 46 to 180; that stretch reads SQWTRGRRRN…AYANSQPAPS (135 aa). Phosphoserine occurs at positions 63 and 66. Tyr73 is subject to Phosphotyrosine. The interaction with GRB2 stretch occupies residues 73–76; it reads YGNL. The segment at 81–103 is disordered; sequence TGRLSQEPRSEEQDPPSSGGLAR. Ser85 and Ser90 each carry phosphoserine. A phosphotyrosine mark is found at Tyr111, Tyr132, and Tyr153. Residues 130–135 are interaction with PTPN11; that stretch reads IKYCEV. Residues 153–156 are interaction with CSK; sequence YASV. Ser166 carries the phosphoserine modification. Tyr172 is modified (phosphotyrosine). Residues 172–175 are interaction with GRB2; the sequence is YANS.

Homodimer; disulfide-linked. When phosphorylated, interacts with PTPN11/SHP2, GRB2 and CSK. Phosphorylated on tyrosines upon TCR activation; which leads to the recruitment of PTPN11, GRB2 and CSK. In terms of tissue distribution, expressed in thymus and spleen, with highest levels in immature thymocytes (at protein level).

The protein resides in the cell membrane. Its function is as follows. Negatively regulates T-cell antigen receptor (TCR)-mediated signaling. Involved in positive selection of T-cells. In Mus musculus (Mouse), this protein is Signaling threshold-regulating transmembrane adapter 1 (Sit1).